Consider the following 70-residue polypeptide: Small, acid-soluble spore protein 1 (70 aa).

It belongs to the alpha/beta-type SASP family.

Its function is as follows. SASP are bound to spore DNA. They are double-stranded DNA-binding proteins that cause DNA to change to an a-like conformation. They protect the DNA backbone from chemical and enzymatic cleavage and are thus involved in dormant spore's high resistance to UV light. The polypeptide is Small, acid-soluble spore protein 1 (Bacillus subtilis).